The sequence spans 265 residues: Undecaprenyl-diphosphatase 1 (265 aa).

7 helical membrane-spanning segments follow: residues 4–24 (IIIA…PISS), 42–62 (AKTF…ILYH), 84–104 (FHVF…HDVI), 108–128 (LFQP…MILA), 184–204 (SEFS…LDLL), 217–237 (MFAV…VTFL), and 245–265 (LKPF…FVLL).

This sequence belongs to the UppP family.

The protein resides in the cell membrane. It catalyses the reaction di-trans,octa-cis-undecaprenyl diphosphate + H2O = di-trans,octa-cis-undecaprenyl phosphate + phosphate + H(+). Functionally, catalyzes the dephosphorylation of undecaprenyl diphosphate (UPP). Confers resistance to bacitracin. The protein is Undecaprenyl-diphosphatase 1 of Bacillus cereus (strain ZK / E33L).